Consider the following 268-residue polypeptide: Mesoderm posterior protein 1 (268 aa).

The segment at Ala17–Leu93 is disordered. Residues Leu36–Ala48 show a composition bias toward polar residues. Residues Ala66–Ser86 show a composition bias toward low complexity. The region spanning Gly82–Leu136 is the bHLH domain. The short motif at Cys163–Pro167 is the CPLCP element. 2 tandem repeats follow at residues Gly182 to Gln183 and Gly184 to Gln185. A 2 X 2 AA tandem repeats of G-Q region spans residues Gly182–Gln185.

The protein localises to the nucleus. Functionally, transcription factor. Plays a role in the epithelialization of somitic mesoderm and in the development of cardiac mesoderm. Defines the rostrocaudal patterning of the somites by participating in distinct Notch pathways. This chain is Mesoderm posterior protein 1 (MESP1), found in Homo sapiens (Human).